The sequence spans 458 residues: NADH-ubiquinone oxidoreductase chain 4 (458 aa).

The next 12 membrane-spanning stretches (helical) occupy residues 21 to 43 (ASLW…QWLN), 58 to 78 (IDQI…LMLL), 93 to 112 (RTFI…AFSA), 116 to 138 (TLFY…RWGN), 145 to 165 (AGIY…VTIL), 196 to 216 (GLAL…HLWL), 224 to 244 (PIAG…YGIM), 257 to 277 (LSYP…SICL), 285 to 305 (LIAY…MIQT), 309 to 329 (FSGA…LFCL), 341 to 361 (ILLL…WWLL), and 379 to 399 (LTIM…TGLA).

Belongs to the complex I subunit 4 family.

Its subcellular location is the mitochondrion membrane. The enzyme catalyses a ubiquinone + NADH + 5 H(+)(in) = a ubiquinol + NAD(+) + 4 H(+)(out). Core subunit of the mitochondrial membrane respiratory chain NADH dehydrogenase (Complex I) that is believed to belong to the minimal assembly required for catalysis. Complex I functions in the transfer of electrons from NADH to the respiratory chain. The immediate electron acceptor for the enzyme is believed to be ubiquinone. This Struthio camelus (Common ostrich) protein is NADH-ubiquinone oxidoreductase chain 4 (MT-ND4).